We begin with the raw amino-acid sequence, 561 residues long: Long-chain-fatty-acid--CoA ligase (561 aa).

213–224 (YTGGTTGVAKGA) is a binding site for ATP.

It belongs to the ATP-dependent AMP-binding enzyme family. The cofactor is Mg(2+).

The protein resides in the membrane. It carries out the reaction a long-chain fatty acid + ATP + CoA = a long-chain fatty acyl-CoA + AMP + diphosphate. The protein operates within lipid metabolism; fatty acid beta-oxidation. In terms of biological role, catalyzes the esterification, concomitant with transport, of exogenous long-chain fatty acids into metabolically active CoA thioesters for subsequent degradation or incorporation into phospholipids. The chain is Long-chain-fatty-acid--CoA ligase (fadD) from Salmonella typhi.